A 511-amino-acid polypeptide reads, in one-letter code: MFS-type transporper mpsC (511 aa).

Basic and acidic residues predominate over residues 1–35; it reads MTSSTESKHSNDESTDLEKQDAEESHGLPEERKQD. The interval 1-65 is disordered; it reads MTSSTESKHS…PDDPANPMNW (65 aa). Transmembrane regions (helical) follow at residues 74 to 94, 108 to 128, 147 to 167, 169 to 189, 201 to 221, 228 to 248, and 303 to 323; these read VVMASLTTLFANITSTAFAPA, ITAALTVSIYLLGFAFGPLVI, ITVAFLIGCAQAKNLGMFLVF, LITGIAGSGPGTIGGGTIADV, AFAMGPLMGPVLGPLMSGFIA, WVFRVLCIATGVMTIVLYFVM, and PITLLLSLYCAFVFGLLILLF. Asparagine 337 carries an N-linked (GlcNAc...) asparagine glycan. 5 helical membrane-spanning segments follow: residues 342–362, 383–403, 411–431, 443–465, and 476–496; these read GLSYLGLGFGLAIGLVLFGML, LLLMVWFAPVIPGGFFWYGWT, ILPMMGTSLIGMGALMVMMPI, VAASALAANTLLRSLAGCFLPLA, and GWGNTLLGFIAIGFTCLPILF.

This sequence belongs to the major facilitator superfamily.

The protein localises to the membrane. MFS-type transporper; part of the gene cluster that mediates the biosynthesis of macrophasetins, 3-decalinoyltetramic acids (DTAs) which feature a tetramate (pyrrolidine-2,4-dione) unit connected to a decalin fragment and that have potent bioactivities. Efflux pump that might be required for efficient secretion of macrophasetins. This chain is MFS-type transporper mpsC, found in Macrophomina phaseolina (strain MS6) (Charcoal rot fungus).